The following is a 229-amino-acid chain: PKHD-type hydroxylase BRADO6316 (229 aa).

Residues Q78 to S180 enclose the Fe2OG dioxygenase domain. H98, D100, and H161 together coordinate Fe cation. Position 171 (R171) interacts with 2-oxoglutarate.

It depends on Fe(2+) as a cofactor. Requires L-ascorbate as cofactor.

The sequence is that of PKHD-type hydroxylase BRADO6316 from Bradyrhizobium sp. (strain ORS 278).